A 791-amino-acid chain; its full sequence is Organellar oligopeptidase A, chloroplastic/mitochondrial (791 aa).

A chloroplast and mitochondrion-targeting transit peptide spans 1–82 (MLMATPTSRA…SSPPSMSSAA (82 aa)). Coiled-coil stretches lie at residues 118 to 138 (RPGIRALLQHLEAELEELEKS) and 239 to 259 (DDEKREEFNKIEQELEKLSHK). A Zn(2+)-binding site is contributed by histidine 571. Glutamate 572 is a catalytic residue. Zn(2+) is bound by residues histidine 575 and glutamate 601. 703-709 (HIFAGGY) serves as a coordination point for substrate.

It belongs to the peptidase M3 family. It depends on Zn(2+) as a cofactor.

The protein localises to the mitochondrion matrix. Its subcellular location is the plastid. The protein resides in the chloroplast stroma. The catalysed reaction is Hydrolysis of oligopeptides, with broad specificity. Gly or Ala commonly occur as P1 or P1' residues, but more distant residues are also important, as is shown by the fact that Z-Gly-Pro-Gly-|-Gly-Pro-Ala is cleaved, but not Z-(Gly)(5).. Its activity is regulated as follows. Inhibited by salicylic acid. Oligopeptidase degrading short peptides from 8 to 23 amino acid residues. Plays a role in the degradation of transit peptides and of peptides derived from other proteolytic events. Does not exhibit a strict cleavage pattern. Binds salicylic acid. The polypeptide is Organellar oligopeptidase A, chloroplastic/mitochondrial (Arabidopsis thaliana (Mouse-ear cress)).